Here is a 331-residue protein sequence, read N- to C-terminus: Inner membrane ABC transporter permease protein YjfF (331 aa).

The Cytoplasmic portion of the chain corresponds to Met-1–Asn-5. A helical transmembrane segment spans residues Leu-6 to Phe-26. At Pro-27–Asn-42 the chain is on the periplasmic side. Residues Ala-43 to Leu-63 traverse the membrane as a helical segment. Residues Ser-64–Leu-88 are Cytoplasmic-facing. Residues Leu-89–Ile-109 form a helical membrane-spanning segment. Topologically, residues Asp-110–Lys-113 are periplasmic. The chain crosses the membrane as a helical span at residues Ile-114 to Val-134. At Ser-135–Gly-159 the chain is on the cytoplasmic side. Residues Gly-160–Ala-180 traverse the membrane as a helical segment. The Periplasmic portion of the chain corresponds to His-181 to Thr-222. Residues Leu-223 to Val-243 form a helical membrane-spanning segment. Residues Glu-244–Ser-250 are Cytoplasmic-facing. The helical transmembrane segment at Val-251–Gly-271 threads the bilayer. The Periplasmic portion of the chain corresponds to Val-272–Lys-294. Residues Ile-295–Trp-315 traverse the membrane as a helical segment. Over Glu-316 to Gln-331 the chain is Cytoplasmic.

Belongs to the binding-protein-dependent transport system permease family. AraH/RbsC subfamily. The complex is composed of two ATP-binding proteins (YtfR), two transmembrane proteins (YtfT and YjfF) and a solute-binding protein (YtfQ).

It is found in the cell inner membrane. Its function is as follows. Part of the ABC transporter complex YtfQRT-YjfF involved in galactofuranose transport. Probably responsible for the translocation of the substrate across the membrane. The sequence is that of Inner membrane ABC transporter permease protein YjfF (yjfF) from Escherichia coli (strain K12).